We begin with the raw amino-acid sequence, 220 residues long: Thiamine-phosphate synthase (220 aa).

Residues 38-42 and N70 each bind 4-amino-2-methyl-5-(diphosphooxymethyl)pyrimidine; that span reads QYRDK. Residues D71 and D90 each contribute to the Mg(2+) site. T109 lines the 4-amino-2-methyl-5-(diphosphooxymethyl)pyrimidine pocket. 135–137 lines the 2-[(2R,5Z)-2-carboxy-4-methylthiazol-5(2H)-ylidene]ethyl phosphate pocket; the sequence is TVS. K138 contributes to the 4-amino-2-methyl-5-(diphosphooxymethyl)pyrimidine binding site. 2-[(2R,5Z)-2-carboxy-4-methylthiazol-5(2H)-ylidene]ethyl phosphate contacts are provided by residues G171 and 191–192; that span reads IS.

It belongs to the thiamine-phosphate synthase family. Mg(2+) is required as a cofactor.

It carries out the reaction 2-[(2R,5Z)-2-carboxy-4-methylthiazol-5(2H)-ylidene]ethyl phosphate + 4-amino-2-methyl-5-(diphosphooxymethyl)pyrimidine + 2 H(+) = thiamine phosphate + CO2 + diphosphate. The enzyme catalyses 2-(2-carboxy-4-methylthiazol-5-yl)ethyl phosphate + 4-amino-2-methyl-5-(diphosphooxymethyl)pyrimidine + 2 H(+) = thiamine phosphate + CO2 + diphosphate. It catalyses the reaction 4-methyl-5-(2-phosphooxyethyl)-thiazole + 4-amino-2-methyl-5-(diphosphooxymethyl)pyrimidine + H(+) = thiamine phosphate + diphosphate. Its pathway is cofactor biosynthesis; thiamine diphosphate biosynthesis; thiamine phosphate from 4-amino-2-methyl-5-diphosphomethylpyrimidine and 4-methyl-5-(2-phosphoethyl)-thiazole: step 1/1. Its function is as follows. Condenses 4-methyl-5-(beta-hydroxyethyl)thiazole monophosphate (THZ-P) and 2-methyl-4-amino-5-hydroxymethyl pyrimidine pyrophosphate (HMP-PP) to form thiamine monophosphate (TMP). This chain is Thiamine-phosphate synthase, found in Agrobacterium fabrum (strain C58 / ATCC 33970) (Agrobacterium tumefaciens (strain C58)).